Reading from the N-terminus, the 313-residue chain is Dihydroorotate dehydrogenase B (NAD(+)), catalytic subunit (313 aa).

FMN is bound by residues serine 21 and 45–46 (KA). Residues lysine 45 and 69-73 (NAIGL) each bind substrate. 2 residues coordinate FMN: asparagine 99 and asparagine 127. Position 127 (asparagine 127) interacts with substrate. Cysteine 130 serves as the catalytic Nucleophile. FMN is bound by residues lysine 165 and isoleucine 191. 192–193 (NT) lines the substrate pocket. FMN is bound by residues glycine 217, 243–244 (GG), and 265–266 (GT).

Belongs to the dihydroorotate dehydrogenase family. Type 1 subfamily. In terms of assembly, heterotetramer of 2 PyrK and 2 PyrD type B subunits. FMN serves as cofactor.

It is found in the cytoplasm. The enzyme catalyses (S)-dihydroorotate + NAD(+) = orotate + NADH + H(+). It functions in the pathway pyrimidine metabolism; UMP biosynthesis via de novo pathway; orotate from (S)-dihydroorotate (NAD(+) route): step 1/1. In terms of biological role, catalyzes the conversion of dihydroorotate to orotate with NAD(+) as electron acceptor. This Geobacillus kaustophilus (strain HTA426) protein is Dihydroorotate dehydrogenase B (NAD(+)), catalytic subunit (pyrD).